A 384-amino-acid chain; its full sequence is 8-amino-7-oxononanoate synthase (384 aa).

Arg21 is a substrate binding site. Gly108–Phe109 serves as a coordination point for pyridoxal 5'-phosphate. Residue His133 participates in substrate binding. Pyridoxal 5'-phosphate-binding residues include Ser179, His207, and Thr233. Lys236 is subject to N6-(pyridoxal phosphate)lysine. Residue Thr352 participates in substrate binding.

The protein belongs to the class-II pyridoxal-phosphate-dependent aminotransferase family. BioF subfamily. In terms of assembly, homodimer. Pyridoxal 5'-phosphate serves as cofactor.

It catalyses the reaction 6-carboxyhexanoyl-[ACP] + L-alanine + H(+) = (8S)-8-amino-7-oxononanoate + holo-[ACP] + CO2. Its pathway is cofactor biosynthesis; biotin biosynthesis. Its function is as follows. Catalyzes the decarboxylative condensation of pimeloyl-[acyl-carrier protein] and L-alanine to produce 8-amino-7-oxononanoate (AON), [acyl-carrier protein], and carbon dioxide. The chain is 8-amino-7-oxononanoate synthase from Escherichia coli (strain SE11).